The primary structure comprises 107 residues: Putative regulatory protein BCG9842_A0044 (107 aa).

This sequence belongs to the RemA family.

This chain is Putative regulatory protein BCG9842_A0044, found in Bacillus cereus (strain G9842).